The chain runs to 120 residues: Immunoglobulin kappa variable 2-30 (120 aa).

The first 20 residues, 1 to 20 (MRLPAQLLGLLMLWVPGSSG), serve as a signal peptide directing secretion. Residues 21–43 (DVVMTQSPLSLPVTLGQPASISC) form a framework-1 region. Residues 21–120 (DVVMTQSPLS…YYCMQGTHWP (100 aa)) enclose the Ig-like domain. Cys-43 and Cys-113 are joined by a disulfide. Residues 44–59 (RSSQSLVYSDGNTYLN) are complementarity-determining-1. The segment at 60 to 74 (WFQQRPGQSPRRLIY) is framework-2. The interval 75–81 (KVSNRDS) is complementarity-determining-2. A framework-3 region spans residues 82 to 113 (GVPDRFSGSGSGTDFTLKISRVEAEDVGVYYC). The complementarity-determining-3 stretch occupies residues 114-120 (MQGTHWP).

As to quaternary structure, immunoglobulins are composed of two identical heavy chains and two identical light chains; disulfide-linked.

It is found in the secreted. The protein resides in the cell membrane. V region of the variable domain of immunoglobulin light chains that participates in the antigen recognition. Immunoglobulins, also known as antibodies, are membrane-bound or secreted glycoproteins produced by B lymphocytes. In the recognition phase of humoral immunity, the membrane-bound immunoglobulins serve as receptors which, upon binding of a specific antigen, trigger the clonal expansion and differentiation of B lymphocytes into immunoglobulins-secreting plasma cells. Secreted immunoglobulins mediate the effector phase of humoral immunity, which results in the elimination of bound antigens. The antigen binding site is formed by the variable domain of one heavy chain, together with that of its associated light chain. Thus, each immunoglobulin has two antigen binding sites with remarkable affinity for a particular antigen. The variable domains are assembled by a process called V-(D)-J rearrangement and can then be subjected to somatic hypermutations which, after exposure to antigen and selection, allow affinity maturation for a particular antigen. The sequence is that of Immunoglobulin kappa variable 2-30 from Homo sapiens (Human).